We begin with the raw amino-acid sequence, 462 residues long: tRNA(Ile)-lysidine synthase (462 aa).

31–36 lines the ATP pocket; it reads SGGRDS.

This sequence belongs to the tRNA(Ile)-lysidine synthase family.

It is found in the cytoplasm. The catalysed reaction is cytidine(34) in tRNA(Ile2) + L-lysine + ATP = lysidine(34) in tRNA(Ile2) + AMP + diphosphate + H(+). Its function is as follows. Ligates lysine onto the cytidine present at position 34 of the AUA codon-specific tRNA(Ile) that contains the anticodon CAU, in an ATP-dependent manner. Cytidine is converted to lysidine, thus changing the amino acid specificity of the tRNA from methionine to isoleucine. The chain is tRNA(Ile)-lysidine synthase from Ralstonia nicotianae (strain ATCC BAA-1114 / GMI1000) (Ralstonia solanacearum).